The sequence spans 658 residues: Transcription factor E2-alpha (658 aa).

Disordered stretches follow at residues 42-82 (STQF…GTHY), 140-191 (SALS…YPAN), 276-313 (NPSV…GTAT), 331-372 (DHSS…SYDG), 460-558 (VPAQ…ERRV), and 628-658 (EEEK…VGHM). Residues 173-179 (PKKVRKV) carry the Nuclear localization signal motif. The segment covering 276-303 (NPSVTSSFSSTPAQYGVSSHTPPISTGD) has biased composition (polar residues). Over residues 333–344 (SSTNFSSTPSTP) the composition is skewed to low complexity. Over residues 345–355 (VGSPQGITGSG) the composition is skewed to polar residues. Basic and acidic residues predominate over residues 493-507 (PDIKRESKEDEENRS). Positions 533–544 (QDEDEDEDDDNL) are enriched in acidic residues. Positions 548-558 (QKAEREKERRV) are enriched in basic and acidic residues. One can recognise a bHLH domain in the interval 555–608 (ERRVANNARERLRVKDINEAFKELGRMCQLHLNSEKPQTKLLILHQAVSVILSL).

In terms of assembly, homodimer. Heterodimer; efficient DNA binding requires dimerization with another bHLH protein. Interacts with tgfb1i1.

The protein localises to the nucleus. Functionally, transcriptional regulator involved in the initiation of neuronal differentiation and mesenchymal to epithelial transition. Heterodimers between tcf3 and tissue-specific basic helix-loop-helix (bHLH) proteins play major roles in determining tissue-specific cell fate during embryogenesis, like muscle or early B-cell differentiation. Together with tcf15, required for the mesenchymal to epithelial transition. Dimers bind DNA on E-box motifs: 5'-CANNTG-3'. In Xenopus laevis (African clawed frog), this protein is Transcription factor E2-alpha (tcf3).